A 414-amino-acid polypeptide reads, in one-letter code: DNA polymerase IV (414 aa).

The region spanning 8-189 is the UmuC domain; it reads IFHIDMNSFY…LPIEEMHGIG (182 aa). Mg(2+) is bound by residues aspartate 12 and aspartate 108. Residue glutamate 109 is part of the active site. Residues 394–414 form a disordered region; the sequence is EESKTRGTSFNRDFFQDEKKR.

The protein belongs to the DNA polymerase type-Y family. As to quaternary structure, monomer. Mg(2+) serves as cofactor.

The protein localises to the cytoplasm. It carries out the reaction DNA(n) + a 2'-deoxyribonucleoside 5'-triphosphate = DNA(n+1) + diphosphate. Its function is as follows. Poorly processive, error-prone DNA polymerase involved in untargeted mutagenesis. Copies undamaged DNA at stalled replication forks, which arise in vivo from mismatched or misaligned primer ends. These misaligned primers can be extended by PolIV. Exhibits no 3'-5' exonuclease (proofreading) activity. May be involved in translesional synthesis, in conjunction with the beta clamp from PolIII. The protein is DNA polymerase IV of Bacillus velezensis (strain DSM 23117 / BGSC 10A6 / LMG 26770 / FZB42) (Bacillus amyloliquefaciens subsp. plantarum).